A 190-amino-acid chain; its full sequence is Copper-binding lipoprotein NosL (190 aa).

An N-terminal signal peptide occupies residues 1–23; sequence MNALHRIGAGTLLAVLLAFGLTG. A lipid anchor (N-palmitoyl cysteine) is attached at Cys24. Residue Cys24 is the site of S-diacylglycerol cysteine attachment. Positions 170 to 190 are disordered; the sequence is MQHGGMHDHAPNGAHNAHAGH. The segment covering 180–190 has biased composition (low complexity); the sequence is PNGAHNAHAGH.

Belongs to the NosL family. As to quaternary structure, monomer.

The protein localises to the cell membrane. Functionally, may act as a metallochaperone involved in nitrous oxide reductase assembly. Specifically binds Cu(+). The polypeptide is Copper-binding lipoprotein NosL (Stutzerimonas stutzeri (Pseudomonas stutzeri)).